We begin with the raw amino-acid sequence, 331 residues long: DNA-directed RNA polymerase subunit alpha (331 aa).

Residues 1–232 (MQGTFRDFLK…DQLSVFVDLE (232 aa)) form an alpha N-terminal domain (alpha-NTD) region. The tract at residues 247-331 (VDPILLRPID…AGLGEDRVVG (85 aa)) is alpha C-terminal domain (alpha-CTD).

This sequence belongs to the RNA polymerase alpha chain family. Homodimer. The RNAP catalytic core consists of 2 alpha, 1 beta, 1 beta' and 1 omega subunit. When a sigma factor is associated with the core the holoenzyme is formed, which can initiate transcription.

It carries out the reaction RNA(n) + a ribonucleoside 5'-triphosphate = RNA(n+1) + diphosphate. DNA-dependent RNA polymerase catalyzes the transcription of DNA into RNA using the four ribonucleoside triphosphates as substrates. This is DNA-directed RNA polymerase subunit alpha from Alkalilimnicola ehrlichii (strain ATCC BAA-1101 / DSM 17681 / MLHE-1).